We begin with the raw amino-acid sequence, 824 residues long: AMP deaminase 2 (824 aa).

The tract at residues 1-43 (MASYPGPGKSKAKYPFKKRASLQASAAAPEARSGLGASPLQSA) is disordered. The span at 10–20 (SKAKYPFKKRA) shows a compositional bias: basic residues. Ser21 is modified (phosphoserine). Over residues 21 to 33 (SLQASAAAPEARS) the composition is skewed to low complexity. Omega-N-methylarginine is present on Arg44. Ser45, Ser63, and Ser79 each carry phosphoserine. Tyr90 is modified (phosphotyrosine). 2 positions are modified to phosphoserine: Ser96 and Ser113. Thr133 carries the post-translational modification Phosphothreonine. 2 positions are modified to phosphoserine: Ser135 and Ser137. Zn(2+)-binding residues include His364 and His366. Residues His366 and 435-440 (KFNAKY) contribute to the substrate site. His633 is a Zn(2+) binding site. Residue Glu636 participates in substrate binding. His655 serves as the catalytic Proton acceptor. Position 710 (Asp710) interacts with Zn(2+). Residue 711–714 (DPLQ) coordinates substrate.

Belongs to the metallo-dependent hydrolases superfamily. Adenosine and AMP deaminases family. In terms of assembly, homotetramer. Zn(2+) serves as cofactor.

It carries out the reaction AMP + H2O + H(+) = IMP + NH4(+). It participates in purine metabolism; IMP biosynthesis via salvage pathway; IMP from AMP: step 1/1. In terms of biological role, AMP deaminase plays a critical role in energy metabolism. Catalyzes the deamination of AMP to IMP and plays an important role in the purine nucleotide cycle. The chain is AMP deaminase 2 from Rattus norvegicus (Rat).